The primary structure comprises 365 residues: tRNA N6-adenosine threonylcarbamoyltransferase (365 aa).

Residues histidine 119 and histidine 123 each contribute to the Fe cation site. Substrate contacts are provided by residues leucine 141 to glycine 145, aspartate 174, glycine 187, and asparagine 288. Aspartate 316 is a Fe cation binding site.

Belongs to the KAE1 / TsaD family. Fe(2+) serves as cofactor.

It is found in the cytoplasm. The enzyme catalyses L-threonylcarbamoyladenylate + adenosine(37) in tRNA = N(6)-L-threonylcarbamoyladenosine(37) in tRNA + AMP + H(+). Required for the formation of a threonylcarbamoyl group on adenosine at position 37 (t(6)A37) in tRNAs that read codons beginning with adenine. Is involved in the transfer of the threonylcarbamoyl moiety of threonylcarbamoyl-AMP (TC-AMP) to the N6 group of A37, together with TsaE and TsaB. TsaD likely plays a direct catalytic role in this reaction. This Agrobacterium fabrum (strain C58 / ATCC 33970) (Agrobacterium tumefaciens (strain C58)) protein is tRNA N6-adenosine threonylcarbamoyltransferase.